The following is a 581-amino-acid chain: MWRQILFILPTLIQGVQRYDQSPLDASPYYRSGGGLMASSGTELDGLPHHNRCEPITISICKNIPYNMTIMPNLIGHTKQEEAGLEVHQFAPLVKIGCSDDLQLFLCSLYVPVCTILERPIPPCRSLCESARVCEKLMKTYNFNWPENLECSKFPVHGGEDLCVAENTTSSASTAATPTRSVAKVTTRKHQTGVESPHRNIGFVCPVQLKTPLGMGYELKVGGKDLHDCGAPCHAMFFPERERTVLRYWVGSWAAVCVASCLFTVLTFLIDSSRFRYPERAIVFLAVCYLVVGCAYVAGLGAGDSVSCREPFPPPVKLGRLQMMSTITQGHRQTTSCTVLFMALYFCCMAAFAWWSCLAFAWFLAAGLKWGHEAIENKSHLFHLVAWAVPALQTISVLALAKVEGDILSGVCFVGQLDTHSLGAFLILPLCIYLSIGALFLLAGFISLFRIRTVMKTDGKRTDKLERLMLRIGFFSGLFILPAVGLLGCLFYEYYNFDEWMIQWHRDICKPFSIPCPAARAPGSPEARPIFQIFMVKYLCSMLVGVTSSVWLYSSKTMVSWRNFVERLQGKEPRTRAQAYV.

The N-terminal stretch at 1 to 18 (MWRQILFILPTLIQGVQR) is a signal peptide. Residues 19 to 247 (YDQSPLDASP…FPERERTVLR (229 aa)) lie on the Extracellular side of the membrane. The FZ domain occupies 48–166 (PHHNRCEPIT…HGGEDLCVAE (119 aa)). 5 disulfides stabilise this stretch: Cys53/Cys114, Cys61/Cys107, Cys98/Cys134, Cys124/Cys163, and Cys128/Cys151. Asn67 carries an N-linked (GlcNAc...) asparagine glycan. Residue Asn167 is glycosylated (N-linked (GlcNAc...) asparagine). A helical transmembrane segment spans residues 248–270 (YWVGSWAAVCVASCLFTVLTFLI). The Cytoplasmic segment spans residues 271–280 (DSSRFRYPER). The helical transmembrane segment at 281-303 (AIVFLAVCYLVVGCAYVAGLGAG) threads the bilayer. Residues 304–343 (DSVSCREPFPPPVKLGRLQMMSTITQGHRQTTSCTVLFMA) are Extracellular-facing. A helical transmembrane segment spans residues 344-364 (LYFCCMAAFAWWSCLAFAWFL). Over 365–380 (AAGLKWGHEAIENKSH) the chain is Cytoplasmic. The chain crosses the membrane as a helical span at residues 381–401 (LFHLVAWAVPALQTISVLALA). Residues 402-421 (KVEGDILSGVCFVGQLDTHS) lie on the Extracellular side of the membrane. The chain crosses the membrane as a helical span at residues 422 to 439 (LGAFLILPLCIYLSIGAL). Residues 440 to 471 (FLLAGFISLFRIRTVMKTDGKRTDKLERLMLR) lie on the Cytoplasmic side of the membrane. Residues 472 to 492 (IGFFSGLFILPAVGLLGCLFY) traverse the membrane as a helical segment. Residues 493–529 (EYYNFDEWMIQWHRDICKPFSIPCPAARAPGSPEARP) are Extracellular-facing. A helical membrane pass occupies residues 530–553 (IFQIFMVKYLCSMLVGVTSSVWLY). Over 554–581 (SSKTMVSWRNFVERLQGKEPRTRAQAYV) the chain is Cytoplasmic. A Lys-Thr-X-X-X-Trp motif, mediates interaction with the PDZ domain of Dvl family members motif is present at residues 556 to 561 (KTMVSW). The PDZ-binding motif lies at 579–581 (AYV).

It belongs to the G-protein coupled receptor Fz/Smo family. Interacts with ATP6AP2. Interacts with tmem208.

It localises to the cell membrane. Receptor for Wnt proteins. Most of frizzled receptors are coupled to the beta-catenin canonical signaling pathway, which leads to the activation of disheveled proteins, inhibition of GSK-3 kinase, nuclear accumulation of beta-catenin and activation of Wnt target genes. A second signaling pathway involving PKC and calcium fluxes has been seen for some family members, but it is not yet clear if it represents a distinct pathway or if it can be integrated in the canonical pathway, as PKC seems to be required for Wnt-mediated inactivation of GSK-3 kinase. Both pathways seem to involve interactions with G-proteins. Required to coordinate the cytoskeletons of epidermal cells to produce a parallel array of cuticular hairs and bristles. The protein is Frizzled (fz) of Drosophila melanogaster (Fruit fly).